A 534-amino-acid chain; its full sequence is Blue-light-activated protein (534 aa).

The PAS domain maps to 20–93 (GKDIFFAAVE…QSIRDAIDQR (74 aa)). The residue at position 70 (C70) is an S-4a-FMN cysteine. The PAC domain occupies 94 to 148 (VDISTEILNYRKDGSSFWNALFISPVYNDAGELIYFFASQLDISRRRDAEEALRQ). Residues 161 to 390 (GIAHDFNNLL…TLRLYFPVDE (230 aa)) form the Histidine kinase domain. At H164 the chain carries Phosphohistidine; by autocatalysis. The 117-residue stretch at 411 to 527 (RILIVEDRPD…DLARKVRQVL (117 aa)) folds into the Response regulatory domain. 4-aspartylphosphate is present on D461.

FMN binds covalently to cysteine after exposure to blue light and this bond is spontaneously broken in the dark.

The enzyme catalyses ATP + protein L-histidine = ADP + protein N-phospho-L-histidine.. Functionally, photosensitive kinase and response regulator that is involved in increased bacterial virulence upon exposure to light. The polypeptide is Blue-light-activated protein (Pseudomonas syringae pv. syringae (strain B728a)).